The primary structure comprises 399 residues: ATP phosphoribosyltransferase regulatory subunit (399 aa).

The protein belongs to the class-II aminoacyl-tRNA synthetase family. HisZ subfamily. In terms of assembly, heteromultimer composed of HisG and HisZ subunits.

It is found in the cytoplasm. It functions in the pathway amino-acid biosynthesis; L-histidine biosynthesis; L-histidine from 5-phospho-alpha-D-ribose 1-diphosphate: step 1/9. Its function is as follows. Required for the first step of histidine biosynthesis. May allow the feedback regulation of ATP phosphoribosyltransferase activity by histidine. This is ATP phosphoribosyltransferase regulatory subunit from Symbiobacterium thermophilum (strain DSM 24528 / JCM 14929 / IAM 14863 / T).